The sequence spans 186 residues: Adenylate kinase (186 aa).

ATP is bound at residue 14-19; that stretch reads GAGKGT. Residues 34 to 63 are NMP; it reads STGDILRDHVARGTPLGERVRPIMERGDLV. AMP-binding positions include threonine 35, arginine 40, 61 to 63, 84 to 87, and glutamine 91; these read DLV and GFPR. The LID stretch occupies residues 125 to 135; it reads RRAELEGRSDD. Arginine 126 is an ATP binding site. Positions 132 and 143 each coordinate AMP. Glycine 171 contacts ATP.

Belongs to the adenylate kinase family. As to quaternary structure, monomer.

It is found in the cytoplasm. The catalysed reaction is AMP + ATP = 2 ADP. It participates in purine metabolism; AMP biosynthesis via salvage pathway; AMP from ADP: step 1/1. Functionally, catalyzes the reversible transfer of the terminal phosphate group between ATP and AMP. Plays an important role in cellular energy homeostasis and in adenine nucleotide metabolism. The protein is Adenylate kinase of Thermus thermophilus (strain ATCC BAA-163 / DSM 7039 / HB27).